Reading from the N-terminus, the 875-residue chain is Valine--tRNA ligase (875 aa).

A 'HIGH' region motif is present at residues 41–51 (PNVTGSLHMGH). Positions 525-529 (KMSKS) match the 'KMSKS' region motif. An ATP-binding site is contributed by Lys-528. A coiled-coil region spans residues 810–875 (VDLELIKKNL…ERISITIKGL (66 aa)).

The protein belongs to the class-I aminoacyl-tRNA synthetase family. ValS type 1 subfamily. Monomer.

Its subcellular location is the cytoplasm. The enzyme catalyses tRNA(Val) + L-valine + ATP = L-valyl-tRNA(Val) + AMP + diphosphate. Its function is as follows. Catalyzes the attachment of valine to tRNA(Val). As ValRS can inadvertently accommodate and process structurally similar amino acids such as threonine, to avoid such errors, it has a 'posttransfer' editing activity that hydrolyzes mischarged Thr-tRNA(Val) in a tRNA-dependent manner. The polypeptide is Valine--tRNA ligase (Pelagibacter ubique (strain HTCC1062)).